The chain runs to 1336 residues: DNA-directed RNA polymerase subunit beta' (1336 aa).

4 residues coordinate Zn(2+): Cys-60, Cys-62, Cys-75, and Cys-78. Asp-535, Asp-537, and Asp-539 together coordinate Mg(2+). Cys-902, Cys-984, Cys-991, and Cys-994 together coordinate Zn(2+).

Belongs to the RNA polymerase beta' chain family. The RNAP catalytic core consists of 2 alpha, 1 beta, 1 beta' and 1 omega subunit. When a sigma factor is associated with the core the holoenzyme is formed, which can initiate transcription. Mg(2+) is required as a cofactor. Requires Zn(2+) as cofactor.

It carries out the reaction RNA(n) + a ribonucleoside 5'-triphosphate = RNA(n+1) + diphosphate. In terms of biological role, DNA-dependent RNA polymerase catalyzes the transcription of DNA into RNA using the four ribonucleoside triphosphates as substrates. This chain is DNA-directed RNA polymerase subunit beta', found in Corynebacterium diphtheriae (strain ATCC 700971 / NCTC 13129 / Biotype gravis).